The sequence spans 144 residues: MSYMIATPAALTAAATDIDGIGSAVSVANAAAVAATTGVLAAGGDEVLAAIARLFNANAEEYHALSAQVAAFQTLFVRTLTGGCGVFRRRRGRQCVTAAEHRAAGAGRRQRRRRSGDGQWRLRQQRHFGCGGQPEFRQHSEHRR.

The 87-residue stretch at 1 to 87 (MSYMIATPAA…RTLTGGCGVF (87 aa)) folds into the PE domain. The tract at residues 98-124 (AAEHRAAGAGRRQRRRRSGDGQWRLRQ) is disordered.

This sequence belongs to the mycobacterial PE family. In terms of assembly, forms a complex with PE10. The complex interacts with human TLR4.

It is found in the secreted. It localises to the cell wall. The protein resides in the cell surface. Its function is as follows. Together with PE10, induces macrophage apoptosis through human Toll-like receptor 4 (TLR4) signaling pathway. Interaction with TLR4 leads to increased levels of phospho-IRF-3, increase in the transcript levels of IFN-beta and pro-apoptotic genes, up-regulation of IL-10, down-regulation of IL-1b and enhanced levels of macrophage apoptosis. The sequence is that of PE family protein PE9 from Mycobacterium tuberculosis (strain ATCC 25618 / H37Rv).